The primary structure comprises 338 residues: MQVYYDKDADLSIIQGKKVAVIGYGSQGHAHANNLKESGVDVVVGLREGSSSAAKAQKAGLAVASIEDAAAQADVVMILAPDEHQAVIYHNQIAPNVKPGAAIAFAHGFNIHFGQIQPAADLDVIMVAPKGPGHLVRSTYVEGGGVPSLIAIHQDATGKAKDIALSYASANGGGRAGVIETSFREETETDLFGEQAVLCGGITSLIQAGFETLVEAGYAPEMAYFECLHETKLIVDLLYQGGIANMRYSISNTAEYGDFTRGPRVINEESREAMREILAEIQEGEFAREFVLENQAGCPTLTARRRLAAEHEIEVVGERLRGMMPWINANKLVDKDKN.

A KARI N-terminal Rossmann domain is found at Met1–Thr181. NADP(+)-binding positions include Tyr24 to Gln27, Arg47, Ser50, Ser52, and Asp82 to Gln85. Residue His107 is part of the active site. Gly133 serves as a coordination point for NADP(+). One can recognise a KARI C-terminal knotted domain in the interval Ser182 to Ile327. Asp190, Glu194, Glu226, and Glu230 together coordinate Mg(2+). Ser251 contributes to the substrate binding site.

Belongs to the ketol-acid reductoisomerase family. The cofactor is Mg(2+).

The enzyme catalyses (2R)-2,3-dihydroxy-3-methylbutanoate + NADP(+) = (2S)-2-acetolactate + NADPH + H(+). The catalysed reaction is (2R,3R)-2,3-dihydroxy-3-methylpentanoate + NADP(+) = (S)-2-ethyl-2-hydroxy-3-oxobutanoate + NADPH + H(+). It functions in the pathway amino-acid biosynthesis; L-isoleucine biosynthesis; L-isoleucine from 2-oxobutanoate: step 2/4. Its pathway is amino-acid biosynthesis; L-valine biosynthesis; L-valine from pyruvate: step 2/4. Its function is as follows. Involved in the biosynthesis of branched-chain amino acids (BCAA). Catalyzes an alkyl-migration followed by a ketol-acid reduction of (S)-2-acetolactate (S2AL) to yield (R)-2,3-dihydroxy-isovalerate. In the isomerase reaction, S2AL is rearranged via a Mg-dependent methyl migration to produce 3-hydroxy-3-methyl-2-ketobutyrate (HMKB). In the reductase reaction, this 2-ketoacid undergoes a metal-dependent reduction by NADPH to yield (R)-2,3-dihydroxy-isovalerate. The polypeptide is Ketol-acid reductoisomerase (NADP(+)) (Alkalilimnicola ehrlichii (strain ATCC BAA-1101 / DSM 17681 / MLHE-1)).